Reading from the N-terminus, the 1254-residue chain is Vitamin B12-dependent ribonucleotide reductase (1254 aa).

Substrate-binding positions include Ser-153, Ala-198–Cys-199, Gly-230, Asn-474–Glu-478, and Pro-675–Ile-679. A disulfide bridge links Cys-199 with Cys-487. The active-site Proton acceptor is the Asn-474. The active-site Cysteine radical intermediate is Cys-476. Catalysis depends on Glu-478, which acts as the Proton acceptor.

This sequence belongs to the ribonucleoside diphosphate reductase class-2 family. Adenosylcob(III)alamin is required as a cofactor.

It catalyses the reaction a 2'-deoxyribonucleoside 5'-diphosphate + [thioredoxin]-disulfide + H2O = a ribonucleoside 5'-diphosphate + [thioredoxin]-dithiol. Catalyzes the reduction of ribonucleotides to deoxyribonucleotides. May function to provide a pool of deoxyribonucleotide precursors for DNA repair during oxygen limitation and/or for immediate growth after restoration of oxygen. In Bradyrhizobium diazoefficiens (strain JCM 10833 / BCRC 13528 / IAM 13628 / NBRC 14792 / USDA 110), this protein is Vitamin B12-dependent ribonucleotide reductase (nrdJ).